The chain runs to 414 residues: MSYIEKQEFLAELKTRNILKDISSPEKFFNLKPDQGIYIGFDPTATSLHLGNYISISLLKRLQKIGIKVLAVIGGATGMIGDPSFSSKERKLLDFKTLNANKEKIKKQLESFGLPVFDNFEIYKNMNILDFLRDVGKNINISYLLAKESVASRIEVGLSFTEFSYQLIQGWDFKFLAENYRIIGQAGGSDQWGNMVTGLDFIKKSNLDQKDEAFVFTTNLLTDENGQKFGKSLGKPIWLDPEMYSPFHLYQFLLNQSDEQAEKIMLWLSFLDLKVINELIFKHKKDKKQRILQYNLAKQVVFDIHGDKGLEIAKKITKILFEKLDYTKITFNDKLELKKIIPYFKVSFFNANQIIDLGIFKSKRELNEFISHKALEINGSKISNISDITEELKDKSNLFLLRKGKKYFFMIELI.

Residue Y38 coordinates L-tyrosine. The short motif at 43-52 (PTATSLHLGN) is the 'HIGH' region element. L-tyrosine contacts are provided by Y165 and Q169. The 'KMSKS' region signature appears at 228–232 (KFGKS). K231 serves as a coordination point for ATP. The region spanning 349–414 (FNANQIIDLG…KKYFFMIELI (66 aa)) is the S4 RNA-binding domain.

It belongs to the class-I aminoacyl-tRNA synthetase family. TyrS type 1 subfamily. Homodimer.

The protein resides in the cytoplasm. The enzyme catalyses tRNA(Tyr) + L-tyrosine + ATP = L-tyrosyl-tRNA(Tyr) + AMP + diphosphate + H(+). Catalyzes the attachment of tyrosine to tRNA(Tyr) in a two-step reaction: tyrosine is first activated by ATP to form Tyr-AMP and then transferred to the acceptor end of tRNA(Tyr). The sequence is that of Tyrosine--tRNA ligase from Mesomycoplasma hyopneumoniae (strain 7448) (Mycoplasma hyopneumoniae).